We begin with the raw amino-acid sequence, 163 residues long: Large ribosomal subunit protein uL10 (163 aa).

This sequence belongs to the universal ribosomal protein uL10 family. Part of the ribosomal stalk of the 50S ribosomal subunit. The N-terminus interacts with L11 and the large rRNA to form the base of the stalk. The C-terminus forms an elongated spine to which L12 dimers bind in a sequential fashion forming a multimeric L10(L12)X complex.

Forms part of the ribosomal stalk, playing a central role in the interaction of the ribosome with GTP-bound translation factors. This is Large ribosomal subunit protein uL10 from Histophilus somni (strain 2336) (Haemophilus somnus).